The primary structure comprises 120 residues: Chaperonin GroEL (120 aa).

Position 23–27 (23–27 (DGTTT)) interacts with ATP.

Belongs to the chaperonin (HSP60) family. In terms of assembly, forms a cylinder of 14 subunits composed of two heptameric rings stacked back-to-back. Interacts with the co-chaperonin GroES.

It localises to the cytoplasm. The catalysed reaction is ATP + H2O + a folded polypeptide = ADP + phosphate + an unfolded polypeptide.. In terms of biological role, together with its co-chaperonin GroES, plays an essential role in assisting protein folding. The GroEL-GroES system forms a nano-cage that allows encapsulation of the non-native substrate proteins and provides a physical environment optimized to promote and accelerate protein folding. In Mycobacterium asiaticum, this protein is Chaperonin GroEL.